A 353-amino-acid chain; its full sequence is Adenine deaminase (353 aa).

Zn(2+) is bound by residues H19, H21, and H208. E211 (proton donor) is an active-site residue. A Zn(2+)-binding site is contributed by D289. D290 provides a ligand contact to substrate.

Belongs to the metallo-dependent hydrolases superfamily. Adenosine and AMP deaminases family. Adenine deaminase type 2 subfamily. Zn(2+) serves as cofactor.

The protein resides in the cytoplasm. It is found in the nucleus. It catalyses the reaction adenine + H2O + H(+) = hypoxanthine + NH4(+). Functionally, catalyzes the hydrolytic deamination of adenine to hypoxanthine. Plays an important role in the purine salvage pathway and in nitrogen catabolism. The protein is Adenine deaminase of Gibberella zeae (strain ATCC MYA-4620 / CBS 123657 / FGSC 9075 / NRRL 31084 / PH-1) (Wheat head blight fungus).